Consider the following 154-residue polypeptide: Small ribosomal subunit protein uS19 (154 aa).

Belongs to the universal ribosomal protein uS19 family.

In Oryza sativa subsp. japonica (Rice), this protein is Small ribosomal subunit protein uS19 (RPS15).